The following is a 167-amino-acid chain: MGLNLTSKQEIVAEIADVASKAYSLVAAEYHGLTVAHLTQLHARARENGVYLRVVKNTLARRALADTEFKAAEEKLVGPLVLAFSMEYPGAAARLWRDFFKENDKISTDIVKFVSISGEVLAGSEFERVAKLPTKEEGISMLMSCMLAPVAKLARTLDAVRQSKEAA.

The protein belongs to the universal ribosomal protein uL10 family. As to quaternary structure, part of the ribosomal stalk of the 50S ribosomal subunit. The N-terminus interacts with L11 and the large rRNA to form the base of the stalk. The C-terminus forms an elongated spine to which L12 dimers bind in a sequential fashion forming a multimeric L10(L12)X complex.

Forms part of the ribosomal stalk, playing a central role in the interaction of the ribosome with GTP-bound translation factors. This is Large ribosomal subunit protein uL10 from Dichelobacter nodosus (strain VCS1703A).